Here is a 369-residue protein sequence, read N- to C-terminus: tRNA-specific 2-thiouridylase MnmA (369 aa).

ATP is bound by residues 12–19 (GMSGGVDS) and M38. Residues 98–100 (NPD) are interaction with target base in tRNA. Catalysis depends on C103, which acts as the Nucleophile. C103 and C200 are joined by a disulfide. G128 provides a ligand contact to ATP. The tract at residues 150 to 152 (KDQ) is interaction with tRNA. Catalysis depends on C200, which acts as the Cysteine persulfide intermediate. An interaction with tRNA region spans residues 312–313 (RY).

This sequence belongs to the MnmA/TRMU family.

Its subcellular location is the cytoplasm. It catalyses the reaction S-sulfanyl-L-cysteinyl-[protein] + uridine(34) in tRNA + AH2 + ATP = 2-thiouridine(34) in tRNA + L-cysteinyl-[protein] + A + AMP + diphosphate + H(+). Its function is as follows. Catalyzes the 2-thiolation of uridine at the wobble position (U34) of tRNA, leading to the formation of s(2)U34. This Tolumonas auensis (strain DSM 9187 / NBRC 110442 / TA 4) protein is tRNA-specific 2-thiouridylase MnmA.